Reading from the N-terminus, the 211-residue chain is Protein-methionine-sulfoxide reductase heme-binding subunit MsrQ (211 aa).

6 helical membrane-spanning segments follow: residues 10 to 30 (WLKVCLHLAGLLPFLWLVWAI), 54 to 74 (FLLAALLITPLARYAKQPLLI), 82 to 102 (LWCFAWATLHLTSYALLELGV), 116 to 136 (PYLTLGIISWVILLALAFTST), 153 to 173 (FVYLVAILAPIHYLWSVKIIS), and 178 to 198 (IYAGLAVLLLALRYKKLLSLF).

It belongs to the MsrQ family. Heterodimer of a catalytic subunit (MsrP) and a heme-binding subunit (MsrQ). FMN serves as cofactor. It depends on heme b as a cofactor.

It is found in the cell inner membrane. Its function is as follows. Part of the MsrPQ system that repairs oxidized periplasmic proteins containing methionine sulfoxide residues (Met-O), using respiratory chain electrons. Thus protects these proteins from oxidative-stress damage caused by reactive species of oxygen and chlorine generated by the host defense mechanisms. MsrPQ is essential for the maintenance of envelope integrity under bleach stress, rescuing a wide series of structurally unrelated periplasmic proteins from methionine oxidation, including the primary periplasmic chaperone SurA and the lipoprotein Pal. MsrQ provides electrons for reduction to the reductase catalytic subunit MsrP, using the quinone pool of the respiratory chain. This chain is Protein-methionine-sulfoxide reductase heme-binding subunit MsrQ, found in Escherichia coli O6:H1 (strain CFT073 / ATCC 700928 / UPEC).